Reading from the N-terminus, the 316-residue chain is Arabinooligosaccharides transport system permease protein AraP (316 aa).

The next 7 helical transmembrane spans lie at 32–52 (VVPY…SFYP), 94–114 (TYMI…AVLL), 128–148 (ALFL…RLMF), 178–198 (MFLM…LYFL), 224–244 (FYVT…ISVI), 254–274 (FVFW…GYLY), and 283–303 (MGFG…ISIT). In terms of domain architecture, ABC transmembrane type-1 spans 89-304 (LQNTTTYMIL…LIIFVISITQ (216 aa)).

It belongs to the binding-protein-dependent transport system permease family. MalFG subfamily. The complex is composed of two ATP-binding proteins (MsmX), two transmembrane proteins (AraP and AraQ) and a solute-binding protein (AraN).

The protein localises to the cell membrane. Part of the ABC transporter complex AraNPQ involved in the uptake of arabinooligosaccharides. Responsible for the translocation of the substrate across the membrane. This is Arabinooligosaccharides transport system permease protein AraP (araP) from Halalkalibacterium halodurans (strain ATCC BAA-125 / DSM 18197 / FERM 7344 / JCM 9153 / C-125) (Bacillus halodurans).